A 1882-amino-acid polypeptide reads, in one-letter code: uncharacterized protein (1882 aa).

Residues 16-36 (FFLLFGIIFVLFSIIFLETSI) form a helical membrane-spanning segment. Disordered stretches follow at residues 103-129 (DFGSDSEKKDSTTKSSDNNPRKGDVND), 220-306 (FPGD…ESET), 492-513 (VALAQQQQDKQESSADDGVKDP), and 658-698 (QTDE…TKST). Residues 221–239 (PGDKGKGEDKKTTKKKSEI) show a composition bias toward basic and acidic residues. Residues 240 to 249 (KQASSATTVL) show a composition bias toward polar residues. Basic and acidic residues-rich tracts occupy residues 259–275 (TDAKETTNNEEPKKDSN), 284–294 (NKDKVWFKSDE), and 500–511 (DKQESSADDGVK). Residues 667 to 698 (AKTTQGTTDSLTQLADASSSSSSSSTGDTKST) show a composition bias toward low complexity. The next 4 helical transmembrane spans lie at 987–1007 (ASVVIAAFLSILALYLTILLI), 1037–1057 (VFAGIVALASSFFGVLFAFLL), 1080–1100 (WISFFGSMLLIFVIFQFISWI), and 1154–1174 (LFTYVGLSSIALLLIGIAGTI). Disordered stretches follow at residues 1233–1253 (DQIQQQQQQQQQQGNDKEHPY) and 1572–1598 (KDGQSTDDSGGTSSGGGSCGGGSTSST). The segment covering 1234–1245 (QIQQQQQQQQQQ) has biased composition (low complexity). Positions 1583-1594 (TSSGGGSCGGGS) are enriched in gly residues. A run of 4 helical transmembrane segments spans residues 1759–1779 (FLLGTIIPFIFITCVVLGISM), 1807–1827 (FFIPAFVLSLLISIAILAGLL), 1828–1848 (VGVQALVFGVAQVFLTNVFEF), and 1851–1871 (YMVGIVLFGATIFVIGSYFWI).

The protein belongs to the ABC-4 integral membrane protein family.

Its subcellular location is the cell membrane. This is an uncharacterized protein from Mycoplasma pneumoniae (strain ATCC 29342 / M129 / Subtype 1) (Mycoplasmoides pneumoniae).